The sequence spans 93 residues: Small ribosomal subunit protein uS15 (93 aa).

This sequence belongs to the universal ribosomal protein uS15 family. Part of the 30S ribosomal subunit. Forms a bridge to the 50S subunit in the 70S ribosome, contacting the 23S rRNA.

Functionally, one of the primary rRNA binding proteins, it binds directly to 16S rRNA where it helps nucleate assembly of the platform of the 30S subunit by binding and bridging several RNA helices of the 16S rRNA. Its function is as follows. Forms an intersubunit bridge (bridge B4) with the 23S rRNA of the 50S subunit in the ribosome. This is Small ribosomal subunit protein uS15 from Anaplasma marginale (strain Florida).